Here is a 334-residue protein sequence, read N- to C-terminus: Glutaminase (334 aa).

7 residues coordinate substrate: serine 76, asparagine 126, glutamate 170, asparagine 177, tyrosine 201, tyrosine 253, and valine 271.

This sequence belongs to the glutaminase family. Homotetramer.

It carries out the reaction L-glutamine + H2O = L-glutamate + NH4(+). This Nostoc sp. (strain PCC 7120 / SAG 25.82 / UTEX 2576) protein is Glutaminase.